The sequence spans 881 residues: Phosphoenolpyruvate carboxylase (881 aa).

Catalysis depends on residues H139 and K544.

The protein belongs to the PEPCase type 1 family. Requires Mg(2+) as cofactor.

It carries out the reaction oxaloacetate + phosphate = phosphoenolpyruvate + hydrogencarbonate. Functionally, forms oxaloacetate, a four-carbon dicarboxylic acid source for the tricarboxylic acid cycle. This Marinobacter nauticus (strain ATCC 700491 / DSM 11845 / VT8) (Marinobacter aquaeolei) protein is Phosphoenolpyruvate carboxylase.